Reading from the N-terminus, the 471-residue chain is MLRALLPSTTLALILAGGGHAAVGDAFPAFAVLCAAWDAATNKQIKPWSEDRELPELNDIYNMNMSIASEEWQTIFDGQAEQQTWSQFAQANAGKYKGIDWKQNWDRWRKQRQQTKDAGGAWQTKNHRPEWAATPRDVRPVILAIAEEATELSRKLEPPRTADGKDLIAEINSKLASARCSGELKAAAGNIGCTGPEGTPDKTTTCTTAKAGGSIGHDMLCLCSVAEATDKCSSTGVGDAVPNSGEKLRSNGFQHIVARCPKGPESGTLPQAIDLALAMLATALGTQQPGSNNMILGKSGGGTCTATNSACVDYHEKFSKQQAGITGIPWVALLQQARALYGTYVDAKLAAQTARQQIVMLAGQAKREYRRPAGSLKDPAGVIQEQATNRRRHGADDTNQCTSNNATADECPETRCEYDSEKNECRPKKGTETTATGPGERTTPADGKANNTVSDSLLIKTSPLWLAFLLF.

An N-terminal signal peptide occupies residues 1-21 (MLRALLPSTTLALILAGGGHA). Residues Asn-64 and Asn-405 are each glycosylated (N-linked (GlcNAc...) asparagine). Residues 406-449 (ATADECPETRCEYDSEKNECRPKKGTETTATGPGERTTPADGKA) are disordered. Over residues 412-431 (PETRCEYDSEKNECRPKKGT) the composition is skewed to basic and acidic residues. Asn-450 carries N-linked (GlcNAc...) asparagine glycosylation. Residue Ser-454 is the site of GPI-anchor amidated serine attachment. Positions 455–471 (DSLLIKTSPLWLAFLLF) are cleaved as a propeptide — removed in mature form.

It is found in the cell membrane. Functionally, VSG forms a coat on the surface of the parasite. The trypanosome evades the immune response of the host by expressing a series of antigenically distinct VSGs from an estimated 1000 VSG genes. In Trypanosoma brucei brucei, this protein is Variant surface glycoprotein ILTAT 1.21.